Here is a 295-residue protein sequence, read N- to C-terminus: uncharacterized protein (295 aa).

The signal sequence occupies residues 1–26; sequence MKKYLALAAIVAICALWLTQNSNFEA.

This is an uncharacterized protein from Archaeoglobus fulgidus (strain ATCC 49558 / DSM 4304 / JCM 9628 / NBRC 100126 / VC-16).